A 726-amino-acid polypeptide reads, in one-letter code: Germacradienol/geosmin synthase (726 aa).

Positions 2–354 (TQQPFQLPHF…TSAADVGALL (353 aa)) are germacradienol/germacrene D synthase. Residues D86, E91, N267, T271, Q276, D455, N598, S602, and E606 each contribute to the Mg(2+) site. The DDXXD motif 1; degenerate motif lies at 86 to 91 (DDHFLE). The segment at 355–726 (ADAVAQRARS…VPRSSPALTH (372 aa)) is geosmin synthase. The DDXXD motif 2; degenerate signature appears at 455-459 (DDYYP).

Belongs to the terpene synthase family. Mg(2+) serves as cofactor.

It carries out the reaction (2E,6E)-farnesyl diphosphate + H2O = (1E,4S,5E,7R)-germacra-1(10),5-dien-11-ol + diphosphate. It catalyses the reaction (1E,4S,5E,7R)-germacra-1(10),5-dien-11-ol + H2O = (-)-geosmin + acetone. The enzyme catalyses (2E,6E)-farnesyl diphosphate = (-)-germacrene D + diphosphate. Its pathway is secondary metabolite biosynthesis; geosmin biosynthesis. It functions in the pathway sesquiterpene biosynthesis; germacradienol biosynthesis; germacradienol from farnesyl diphosphate: step 1/1. It participates in sesquiterpene biosynthesis; germacrene D biosynthesis; germacrene D from farnesyl diphosphate: step 1/1. Tow-domain protein where the N-terminal domain catalyzes the cyclization of farnesyl diphosphate (FPP) to a 85:15 mixture of the sesquiterpene alcohol germacradienol and the sesquiterpene hydrocarbon germacrene D. The C-terminal domain partially converts the germacradienol formed into geosmin, the characteristic odoriferous ('earthy aroma') constituent of Streptomyces species. This chain is Germacradienol/geosmin synthase (cyc2), found in Streptomyces coelicolor (strain ATCC BAA-471 / A3(2) / M145).